The primary structure comprises 401 residues: Argininosuccinate synthase (401 aa).

8–16 (AYSGGLDTS) lines the ATP pocket. An L-citrulline-binding site is contributed by Y85. G115 provides a ligand contact to ATP. L-aspartate contacts are provided by T117, N121, and D122. Position 121 (N121) interacts with L-citrulline. Positions 125, 173, 258, and 270 each coordinate L-citrulline.

It belongs to the argininosuccinate synthase family. Type 1 subfamily. Homotetramer.

The protein localises to the cytoplasm. The catalysed reaction is L-citrulline + L-aspartate + ATP = 2-(N(omega)-L-arginino)succinate + AMP + diphosphate + H(+). The protein operates within amino-acid biosynthesis; L-arginine biosynthesis; L-arginine from L-ornithine and carbamoyl phosphate: step 2/3. In Staphylococcus aureus (strain MRSA252), this protein is Argininosuccinate synthase.